We begin with the raw amino-acid sequence, 100 residues long: Protein RnfH (100 aa).

Belongs to the UPF0125 (RnfH) family.

The chain is Protein RnfH from Pseudomonas paraeruginosa (strain DSM 24068 / PA7) (Pseudomonas aeruginosa (strain PA7)).